We begin with the raw amino-acid sequence, 67 residues long: Large ribosomal subunit protein bL35 (67 aa).

It belongs to the bacterial ribosomal protein bL35 family.

This Dehalococcoides mccartyi (strain ATCC BAA-2266 / KCTC 15142 / 195) (Dehalococcoides ethenogenes (strain 195)) protein is Large ribosomal subunit protein bL35.